A 155-amino-acid chain; its full sequence is Small ribosomal subunit protein uS7 (155 aa).

This sequence belongs to the universal ribosomal protein uS7 family. In terms of assembly, part of the 30S ribosomal subunit. Contacts proteins S9 and S11.

Its function is as follows. One of the primary rRNA binding proteins, it binds directly to 16S rRNA where it nucleates assembly of the head domain of the 30S subunit. Is located at the subunit interface close to the decoding center, probably blocks exit of the E-site tRNA. The protein is Small ribosomal subunit protein uS7 of Petrotoga mobilis (strain DSM 10674 / SJ95).